The primary structure comprises 489 residues: FAD-linked oxidoreductase tazG (489 aa).

An N-terminal signal peptide occupies residues 1 to 17 (MVAFSAILQTALGLSAA). N-linked (GlcNAc...) asparagine glycosylation occurs at Asn38. The region spanning 55-224 (APSYGAGAIK…TSATYRLPEV (170 aa)) is the FAD-binding PCMH-type domain. N-linked (GlcNAc...) asparagine glycans are attached at residues Asn242 and Asn306.

This sequence belongs to the oxygen-dependent FAD-linked oxidoreductase family. Requires FAD as cofactor.

The protein operates within secondary metabolite biosynthesis. In terms of biological role, FAD-linked oxidoreductase; part of the gene cluster that mediates the biosynthesis of azaterrilone A and other azaphilones, a class of fungal metabolites characterized by a highly oxygenated pyrano-quinone bicyclic core and exhibiting a broad range of bioactivities. The first step of the pathway begins with the non-reducing polyketide synthase tazA that assembles one acetyl-CoA starter unit, five malonyl-CoA units, and catalyzes a series of Claisen condensations, methylation, PT-mediated cyclization, and finally releases the first hexaketide precursor through the R-domain. The tazA product then undergoes reduction on its terminal ketone and the following pyran-ring formation by yet undetermined enzyme(s). Dehydration and enoyl reduction, possibly involving the trans-enoyl reductase tazE leads to the next intermediate. TazD is predicted as an acetyltransferase and might catalyze the acetylation steps leading to the synthesis of azaterrilone A. Azaterrilone A is not the final product of the taz pathway and both the highly reducing polyketide synthase tazB and the dual enzyme tazHJ catalyze late steps of the pathway, leading to the production of the 2 final stereoisomers that contain additional polyketide modification whose structures have still to be determined. This Aspergillus terreus (strain NIH 2624 / FGSC A1156) protein is FAD-linked oxidoreductase tazG.